Reading from the N-terminus, the 527-residue chain is PTS system maltose-specific EIICB component (527 aa).

Residues methionine 1–lysine 418 form the PTS EIIC type-1 domain. 12 consecutive transmembrane segments (helical) span residues phenylalanine 8–isoleucine 28, glycine 59–alanine 79, valine 93–glycine 113, isoleucine 132–leucine 152, tyrosine 173–tryptophan 193, isoleucine 200–phenylalanine 220, isoleucine 224–valine 244, phenylalanine 276–valine 296, leucine 305–proline 325, isoleucine 326–alanine 346, valine 357–phenylalanine 377, and methionine 382–phenylalanine 402. One can recognise a PTS EIIB type-1 domain in the interval aspartate 449–glutamine 527. The active-site Phosphocysteine intermediate; for EIIB activity is cysteine 471.

Its subcellular location is the cell membrane. The catalysed reaction is D-maltose(out) + N(pros)-phospho-L-histidyl-[protein] = alpha-maltose 6'-phosphate(in) + L-histidyl-[protein]. In terms of biological role, the phosphoenolpyruvate-dependent sugar phosphotransferase system (sugar PTS), a major carbohydrate active transport system, catalyzes the phosphorylation of incoming sugar substrates concomitantly with their translocation across the cell membrane. This system is involved in maltose transport. This chain is PTS system maltose-specific EIICB component, found in Bacillus subtilis (strain 168).